A 339-amino-acid polypeptide reads, in one-letter code: Quinolinate synthase (339 aa).

His-63 and Ser-81 together coordinate iminosuccinate. Cys-126 is a [4Fe-4S] cluster binding site. Iminosuccinate-binding positions include Tyr-152 to Asn-154 and Ser-169. Cys-211 lines the [4Fe-4S] cluster pocket. Residues His-237–Glu-239 and Thr-254 each bind iminosuccinate. Residue Cys-297 coordinates [4Fe-4S] cluster.

It belongs to the quinolinate synthase family. Type 2 subfamily. The cofactor is [4Fe-4S] cluster.

The protein localises to the cytoplasm. The catalysed reaction is iminosuccinate + dihydroxyacetone phosphate = quinolinate + phosphate + 2 H2O + H(+). It functions in the pathway cofactor biosynthesis; NAD(+) biosynthesis; quinolinate from iminoaspartate: step 1/1. In terms of biological role, catalyzes the condensation of iminoaspartate with dihydroxyacetone phosphate to form quinolinate. The protein is Quinolinate synthase of Xylella fastidiosa (strain 9a5c).